A 500-amino-acid polypeptide reads, in one-letter code: Glucokinase-1 (500 aa).

Position 2 is an N-acetylserine (Ser2). Ser2 is modified (phosphoserine). The Hexokinase domain occupies 12 to 498; sequence RAVIQAVDQI…SGVGAALCAL (487 aa). Positions 74–216 are hexokinase small subdomain; that stretch reads NGTERGVLLA…MPMIKVVALT (143 aa). Residue Lys110 participates in ATP binding. The glucose-binding stretch occupies residues 158–184; the sequence is KLGFTFSYPVDQTSLNSGTLIRWTKGF. The segment at 217–487 is hexokinase large subdomain; it reads NDTVGTYLSH…RKVHLKIAKD (271 aa). Position 470 is a phosphoserine (Ser470). ATP is bound at residue 487-492; the sequence is DGSGVG.

It belongs to the hexokinase family. In terms of assembly, monomer.

It carries out the reaction D-glucose + ATP = D-glucose 6-phosphate + ADP + H(+). It participates in carbohydrate metabolism; hexose metabolism. It functions in the pathway carbohydrate degradation; glycolysis; D-glyceraldehyde 3-phosphate and glycerone phosphate from D-glucose: step 1/4. In terms of biological role, two isoenzymes, hexokinase-1 and hexokinase-2, can phosphorylate keto- and aldohexoses in yeast, whereas a third isoenzyme, GLK, is specific for aldohexoses. All glucose phosphorylating enzymes are involved in glucose uptake. The chain is Glucokinase-1 (GLK1) from Saccharomyces cerevisiae (strain ATCC 204508 / S288c) (Baker's yeast).